Here is a 395-residue protein sequence, read N- to C-terminus: MHIAQELADETCNSPRGAGHARLRYPSDRRTAIPRNRRPLEGLWRFRRVRDIDLQVKEGEFICFLGPSGCGKTTLLRAIAGLDIQSRGTICQGGQDISRLPPAQRDYGIVFQSYALFPNLTIEKNIAFGLENIGRPRREIASRVSELLELVGLSSQGRKYPAQLSGGQQQRVALARAMAISPGLLLLDEPLSALDAKVRVHLRHEIKELQRKLGVTTIMVTHDQEEALAMADRIVVMNQGGIEQVGTPTEIYRHPKTLFVADFIGETNQFPATVGKGAQVEIGHTRFACAEHRLPSGASVVAAVRPADIIPHGAAAHRATGLDAVGNADNLIDAHVEDMEFLGMFWRTRLSAPRLKEKALVADFSTNAVRRLSIEIGSAIQVEIPQERLLLFAKA.

Residues 1 to 21 form a disordered region; it reads MHIAQELADETCNSPRGAGHA. An ABC transporter domain is found at 23 to 264; sequence LRYPSDRRTA…PKTLFVADFI (242 aa). 66–73 contributes to the ATP binding site; the sequence is GPSGCGKT.

It belongs to the ABC transporter superfamily. Fe(3+) ion importer (TC 3.A.1.10) family. In terms of assembly, the complex is composed of two ATP-binding proteins (FbpC), two transmembrane proteins (FbpB) and a solute-binding protein (FbpA).

Its subcellular location is the cell inner membrane. The catalysed reaction is Fe(3+)(out) + ATP + H2O = Fe(3+)(in) + ADP + phosphate + H(+). Functionally, part of the ABC transporter complex FbpABC involved in Fe(3+) ions import. Responsible for energy coupling to the transport system. This chain is Fe(3+) ions import ATP-binding protein FbpC 2, found in Rhizobium meliloti (strain 1021) (Ensifer meliloti).